A 237-amino-acid chain; its full sequence is LexA repressor (237 aa).

The segment at residues 26 to 46 (FDEMKDALDLRSKSGIHRLIT) is a DNA-binding region (H-T-H motif). Residues S158 and K196 each act as for autocatalytic cleavage activity in the active site.

This sequence belongs to the peptidase S24 family. Homodimer.

It carries out the reaction Hydrolysis of Ala-|-Gly bond in repressor LexA.. In terms of biological role, represses a number of genes involved in the response to DNA damage (SOS response), including recA and lexA. In the presence of single-stranded DNA, RecA interacts with LexA causing an autocatalytic cleavage which disrupts the DNA-binding part of LexA, leading to derepression of the SOS regulon and eventually DNA repair. The protein is LexA repressor of Rhodopseudomonas palustris (strain BisB18).